Consider the following 1414-residue polypeptide: DNA-directed RNA polymerase subunit beta' (1414 aa).

Residues C70, C72, C85, and C88 each coordinate Zn(2+). Mg(2+) is bound by residues D460, D462, and D464. The Zn(2+) site is built by C814, C888, C895, and C898. The disordered stretch occupies residues 1378 to 1414; sequence EREAARQLANPFEDAPVTVGGEPEAPAADTPSDDSAE.

It belongs to the RNA polymerase beta' chain family. As to quaternary structure, the RNAP catalytic core consists of 2 alpha, 1 beta, 1 beta' and 1 omega subunit. When a sigma factor is associated with the core the holoenzyme is formed, which can initiate transcription. It depends on Mg(2+) as a cofactor. Zn(2+) is required as a cofactor.

It catalyses the reaction RNA(n) + a ribonucleoside 5'-triphosphate = RNA(n+1) + diphosphate. Its function is as follows. DNA-dependent RNA polymerase catalyzes the transcription of DNA into RNA using the four ribonucleoside triphosphates as substrates. This is DNA-directed RNA polymerase subunit beta' from Bordetella bronchiseptica (strain ATCC BAA-588 / NCTC 13252 / RB50) (Alcaligenes bronchisepticus).